The chain runs to 339 residues: Methionine import ATP-binding protein MetN 2 (339 aa).

The region spanning 2–241 is the ABC transporter domain; that stretch reads ISFNNVSKLY…PKTKTTQNFV (240 aa). 38 to 45 is an ATP binding site; the sequence is GFSGAGKS.

It belongs to the ABC transporter superfamily. Methionine importer (TC 3.A.1.24) family. The complex is composed of two ATP-binding proteins (MetN), two transmembrane proteins (MetI) and a solute-binding protein (MetQ).

It is found in the cell membrane. It catalyses the reaction L-methionine(out) + ATP + H2O = L-methionine(in) + ADP + phosphate + H(+). It carries out the reaction D-methionine(out) + ATP + H2O = D-methionine(in) + ADP + phosphate + H(+). Part of the ABC transporter complex MetNIQ involved in methionine import. Responsible for energy coupling to the transport system. The sequence is that of Methionine import ATP-binding protein MetN 2 from Bacillus cereus (strain ATCC 14579 / DSM 31 / CCUG 7414 / JCM 2152 / NBRC 15305 / NCIMB 9373 / NCTC 2599 / NRRL B-3711).